The following is a 431-amino-acid chain: UDP-N-acetylglucosamine 1-carboxyvinyltransferase (431 aa).

22–23 (KN) lines the phosphoenolpyruvate pocket. Residue Arg-93 coordinates UDP-N-acetyl-alpha-D-glucosamine. Cys-117 (proton donor) is an active-site residue. Residue Cys-117 is modified to 2-(S-cysteinyl)pyruvic acid O-phosphothioketal. The UDP-N-acetyl-alpha-D-glucosamine site is built by Asp-307 and Val-329.

The protein belongs to the EPSP synthase family. MurA subfamily.

It is found in the cytoplasm. It carries out the reaction phosphoenolpyruvate + UDP-N-acetyl-alpha-D-glucosamine = UDP-N-acetyl-3-O-(1-carboxyvinyl)-alpha-D-glucosamine + phosphate. The protein operates within cell wall biogenesis; peptidoglycan biosynthesis. In terms of biological role, cell wall formation. Adds enolpyruvyl to UDP-N-acetylglucosamine. This is UDP-N-acetylglucosamine 1-carboxyvinyltransferase from Nitrosococcus oceani (strain ATCC 19707 / BCRC 17464 / JCM 30415 / NCIMB 11848 / C-107).